A 477-amino-acid chain; its full sequence is Phosphomethylpyrimidine synthase (477 aa).

Substrate-binding positions include N67, M96, Y125, H160, 180-182, 221-224, and E260; these read SRG and DGLR. A Zn(2+)-binding site is contributed by H264. Y287 contacts substrate. Zn(2+) is bound at residue H328. [4Fe-4S] cluster is bound by residues C408, C411, and C416. The segment covering 427-440 has biased composition (basic and acidic residues); it reads AGDGMDGLESRTDL. The disordered stretch occupies residues 427–477; that stretch reads AGDGMDGLESRTDLDSSAAAAVNRPPTGVHRAEKLDDIPCPVAEDDVAADD.

Belongs to the ThiC family. The cofactor is [4Fe-4S] cluster.

It carries out the reaction 5-amino-1-(5-phospho-beta-D-ribosyl)imidazole + S-adenosyl-L-methionine = 4-amino-2-methyl-5-(phosphooxymethyl)pyrimidine + CO + 5'-deoxyadenosine + formate + L-methionine + 3 H(+). It participates in cofactor biosynthesis; thiamine diphosphate biosynthesis. Its function is as follows. Catalyzes the synthesis of the hydroxymethylpyrimidine phosphate (HMP-P) moiety of thiamine from aminoimidazole ribotide (AIR) in a radical S-adenosyl-L-methionine (SAM)-dependent reaction. In Natronomonas pharaonis (strain ATCC 35678 / DSM 2160 / CIP 103997 / JCM 8858 / NBRC 14720 / NCIMB 2260 / Gabara) (Halobacterium pharaonis), this protein is Phosphomethylpyrimidine synthase.